The primary structure comprises 841 residues: Translation initiation factor IF-2 (841 aa).

Residues 341–508 (NRAPVVTIMG…AILLQAEILE (168 aa)) enclose the tr-type G domain. A G1 region spans residues 350-357 (GHVDHGKT). GTP is bound at residue 350 to 357 (GHVDHGKT). Residues 375–379 (GITQC) are G2. A G3 region spans residues 396 to 399 (DTPG). Residues 396–400 (DTPGH) and 450–453 (NKID) contribute to the GTP site. The G4 stretch occupies residues 450-453 (NKID). The G5 stretch occupies residues 486–488 (SAK).

Belongs to the TRAFAC class translation factor GTPase superfamily. Classic translation factor GTPase family. IF-2 subfamily.

It is found in the cytoplasm. Its function is as follows. One of the essential components for the initiation of protein synthesis. Protects formylmethionyl-tRNA from spontaneous hydrolysis and promotes its binding to the 30S ribosomal subunits. Also involved in the hydrolysis of GTP during the formation of the 70S ribosomal complex. This is Translation initiation factor IF-2 from Wigglesworthia glossinidia brevipalpis.